The primary structure comprises 232 residues: Ion-translocating oxidoreductase complex subunit E (232 aa).

The next 6 membrane-spanning stretches (helical) occupy residues 12–31 (LWRN…LLAV), 39–59 (LGLG…VSAL), 69–89 (IPIY…LINA), 92–112 (FGLY…CIVI), 125–145 (ALAA…LLLL), and 182–202 (PFLL…MLVG).

Belongs to the NqrDE/RnfAE family. In terms of assembly, the complex is composed of six subunits: RnfA, RnfB, RnfC, RnfD, RnfE and RnfG.

It localises to the cell inner membrane. Functionally, part of a membrane-bound complex that couples electron transfer with translocation of ions across the membrane. The chain is Ion-translocating oxidoreductase complex subunit E from Sodalis glossinidius (strain morsitans).